We begin with the raw amino-acid sequence, 421 residues long: Histidine--tRNA ligase (421 aa).

This sequence belongs to the class-II aminoacyl-tRNA synthetase family. As to quaternary structure, homodimer.

Its subcellular location is the cytoplasm. The catalysed reaction is tRNA(His) + L-histidine + ATP = L-histidyl-tRNA(His) + AMP + diphosphate + H(+). This chain is Histidine--tRNA ligase, found in Francisella tularensis subsp. holarctica (strain OSU18).